Here is a 251-residue protein sequence, read N- to C-terminus: Imidazole glycerol phosphate synthase subunit HisF (251 aa).

Active-site residues include D12 and D131.

This sequence belongs to the HisA/HisF family. As to quaternary structure, heterodimer of HisH and HisF.

Its subcellular location is the cytoplasm. It catalyses the reaction 5-[(5-phospho-1-deoxy-D-ribulos-1-ylimino)methylamino]-1-(5-phospho-beta-D-ribosyl)imidazole-4-carboxamide + L-glutamine = D-erythro-1-(imidazol-4-yl)glycerol 3-phosphate + 5-amino-1-(5-phospho-beta-D-ribosyl)imidazole-4-carboxamide + L-glutamate + H(+). It functions in the pathway amino-acid biosynthesis; L-histidine biosynthesis; L-histidine from 5-phospho-alpha-D-ribose 1-diphosphate: step 5/9. In terms of biological role, IGPS catalyzes the conversion of PRFAR and glutamine to IGP, AICAR and glutamate. The HisF subunit catalyzes the cyclization activity that produces IGP and AICAR from PRFAR using the ammonia provided by the HisH subunit. In Streptomyces avermitilis (strain ATCC 31267 / DSM 46492 / JCM 5070 / NBRC 14893 / NCIMB 12804 / NRRL 8165 / MA-4680), this protein is Imidazole glycerol phosphate synthase subunit HisF.